A 594-amino-acid chain; its full sequence is Dictomallein-4 (594 aa).

The signal sequence occupies residues 1-18 (MKLVLIFLIINFLLIINC). The Peptidase M66 domain maps to 147-408 (PDVSQDYTLK…QNYFKNSIYY (262 aa)). Histidine 300 contacts Zn(2+). Glutamate 301 is a catalytic residue. Residues histidine 304 and histidine 310 each contribute to the Zn(2+) site.

Belongs to the dictomallein family. Requires Zn(2+) as cofactor.

It is found in the secreted. This chain is Dictomallein-4 (dtmlD), found in Dictyostelium discoideum (Social amoeba).